We begin with the raw amino-acid sequence, 182 residues long: uncharacterized protein (182 aa).

This is an uncharacterized protein from Mycobacterium tuberculosis (strain CDC 1551 / Oshkosh).